The primary structure comprises 149 residues: Large ribosomal subunit protein bL9 (149 aa).

This sequence belongs to the bacterial ribosomal protein bL9 family.

In terms of biological role, binds to the 23S rRNA. This Salinibacter ruber (strain DSM 13855 / M31) protein is Large ribosomal subunit protein bL9.